We begin with the raw amino-acid sequence, 140 residues long: Gastrula zinc finger protein XlCGF49.1 (140 aa).

5 C2H2-type zinc fingers span residues 6–28, 34–56, 62–84, 90–112, and 118–140; these read FTCM…YKIH, FTCM…YKMH, FSCS…QKIH, YACT…WKIH, and FSCT…QKMH.

It belongs to the krueppel C2H2-type zinc-finger protein family.

Its subcellular location is the nucleus. In terms of biological role, may be involved in transcriptional regulation. This Xenopus laevis (African clawed frog) protein is Gastrula zinc finger protein XlCGF49.1.